The following is a 282-amino-acid chain: Predicted GPI-anchored protein 23 (282 aa).

The N-terminal stretch at 1–18 (MRVSTLVLSTSIIPIATA) is a signal peptide. Positions 163 to 264 (GQETSGAGSL…SSNSSSSAGM (102 aa)) are disordered. N-linked (GlcNAc...) asparagine glycans are attached at residues Asn-180, Asn-192, and Asn-257. Positions 186–216 (GGSGSSNGTSSGSGSGSGAGVGSGSGSGSGS) are enriched in gly residues. Low complexity predominate over residues 236–264 (LGISSSISQSTTRQLQTSGSSNSSSSAGM). Ser-259 carries GPI-anchor amidated serine lipidation. A propeptide spans 260–282 (SSAGMGNVVVGMNAVALAALVLI) (removed in mature form).

It is found in the cell membrane. In terms of biological role, probable cell surface protein involved in the process of adhesion and early events of invasion. The polypeptide is Predicted GPI-anchored protein 23 (PGA23) (Candida albicans (strain SC5314 / ATCC MYA-2876) (Yeast)).